The sequence spans 300 residues: Protoheme IX farnesyltransferase (300 aa).

The next 9 membrane-spanning stretches (helical) occupy residues 26–46, 54–74, 102–122, 123–143, 150–170, 177–197, 224–244, 246–266, and 279–299; these read VVQL…PGLP, IAWA…FNCI, LLFS…LVNP, LTMW…TLIL, NIVI…AAMT, ALIL…ALAL, VLLY…YGMS, WPYL…GFAL, and FRFS…DHYL.

Belongs to the UbiA prenyltransferase family. Protoheme IX farnesyltransferase subfamily.

The protein resides in the cell inner membrane. It catalyses the reaction heme b + (2E,6E)-farnesyl diphosphate + H2O = Fe(II)-heme o + diphosphate. It functions in the pathway porphyrin-containing compound metabolism; heme O biosynthesis; heme O from protoheme: step 1/1. In terms of biological role, converts heme B (protoheme IX) to heme O by substitution of the vinyl group on carbon 2 of heme B porphyrin ring with a hydroxyethyl farnesyl side group. The protein is Protoheme IX farnesyltransferase of Verminephrobacter eiseniae (strain EF01-2).